The chain runs to 273 residues: Ribosomal RNA small subunit methyltransferase A (273 aa).

S-adenosyl-L-methionine contacts are provided by Asn20, Leu22, Gly47, Glu68, Asp90, and Asn110.

Belongs to the class I-like SAM-binding methyltransferase superfamily. rRNA adenine N(6)-methyltransferase family. RsmA subfamily.

It localises to the cytoplasm. The catalysed reaction is adenosine(1518)/adenosine(1519) in 16S rRNA + 4 S-adenosyl-L-methionine = N(6)-dimethyladenosine(1518)/N(6)-dimethyladenosine(1519) in 16S rRNA + 4 S-adenosyl-L-homocysteine + 4 H(+). Specifically dimethylates two adjacent adenosines (A1518 and A1519) in the loop of a conserved hairpin near the 3'-end of 16S rRNA in the 30S particle. May play a critical role in biogenesis of 30S subunits. In Chlorobium luteolum (strain DSM 273 / BCRC 81028 / 2530) (Pelodictyon luteolum), this protein is Ribosomal RNA small subunit methyltransferase A.